The sequence spans 473 residues: Membrane-bound acylglycerophosphatidylinositol O-acyltransferase MBOAT7 (473 aa).

Residues 1 to 5 (MTPEE) are Cytoplasmic-facing. A helical transmembrane segment spans residues 6–22 (WTYLMVLLISIPVGFLF). The Lumenal segment spans residues 23-33 (KKAGPGLKRWG). The chain crosses the membrane as a helical span at residues 34 to 57 (AAAVGLGLTLFTCGPHSLHSLITI). Over 58–73 (LGTWALIQAQPCSCHA) the chain is Cytoplasmic. A helical membrane pass occupies residues 74–93 (LALAWTFSYLLFFRALSLLG). The Lumenal segment spans residues 94–194 (LPTPTPFTNA…VPSLRPLLRR (101 aa)). A helical membrane pass occupies residues 195–212 (AWPAPLFGLLFLLSSHLF). The Cytoplasmic portion of the chain corresponds to 213-231 (PLEAVREDAFYARPLPTRL). A helical membrane pass occupies residues 232–261 (FYMIPVFFAFRMRFYVAWIAAECGCIAAGF). Residues 262 to 426 (GAYPVAAKAR…LSMADTLRYW (165 aa)) lie on the Lumenal side of the membrane. An N-linked (GlcNAc...) asparagine glycan is attached at Asn321. The chain crosses the membrane as a helical span at residues 427–447 (ASIYFWVHFLALACLGLGLVL). Residues 448–473 (GGGSPSKRKTPSQATSSQAKEKLREE) lie on the Cytoplasmic side of the membrane. Residues 451-473 (SPSKRKTPSQATSSQAKEKLREE) are disordered.

It belongs to the membrane-bound acyltransferase family. Interacts with SPTSSA; the interaction facilitates MBOAT7 location to mitochondria-associated membranes (MAMs).

Its subcellular location is the endoplasmic reticulum membrane. It carries out the reaction a 1-acyl-sn-glycero-3-phospho-(1D-myo-inositol) + an acyl-CoA = a 1,2-diacyl-sn-glycero-3-phospho-(1D-myo-inositol) + CoA. The catalysed reaction is 1-octadecanoyl-sn-glycero-3-phospho-(1D-myo-inositol) + (5Z,8Z,11Z,14Z)-eicosatetraenoyl-CoA = 1-octadecanoyl-2-(5Z,8Z,11Z,14Z-eicosatetraenoyl)-sn-glycero-3-phospho-(1D-myo-inositol) + CoA. The enzyme catalyses a 1-acyl-sn-glycero-3-phospho-(1D-myo-inositol) + (5Z,8Z,11Z,14Z)-eicosatetraenoyl-CoA = a 1-acyl-2-(5Z,8Z,11Z,14Z-eicosatetraenoyl)-sn-glycero-3-phospho-(1D-myo-inositol) + CoA. It catalyses the reaction (5Z,8Z,11Z,14Z)-eicosatetraenoyl-CoA + 1-hexadecanoyl-sn-glycero-3-phosphocholine = 1-hexadecanoyl-2-(5Z,8Z,11Z,14Z-eicosatetraenoyl)-sn-glycero-3-phosphocholine + CoA. The protein operates within lipid metabolism; phospholipid metabolism. In terms of biological role, acyltransferase which catalyzes the transfer of an acyl group from an acyl-CoA to a lysophosphatidylinositol (1-acylglycerophosphatidylinositol or LPI) leading to the production of a phosphatidylinositol (1,2-diacyl-sn-glycero-3-phosphoinositol or PI) and participates in the reacylation step of the phospholipid remodeling pathway also known as the Lands cycle. Prefers arachidonoyl-CoA as the acyl donor, thus contributing to the regulation of free levels arachidonic acid in cell. In liver, participates in the regulation of triglyceride metabolism through the phosphatidylinositol acyl-chain remodeling regulation. This Mus musculus (Mouse) protein is Membrane-bound acylglycerophosphatidylinositol O-acyltransferase MBOAT7.